We begin with the raw amino-acid sequence, 125 residues long: Large ribosomal subunit protein bL12 (125 aa).

Belongs to the bacterial ribosomal protein bL12 family. In terms of assembly, homodimer. Part of the ribosomal stalk of the 50S ribosomal subunit. Forms a multimeric L10(L12)X complex, where L10 forms an elongated spine to which 2 to 4 L12 dimers bind in a sequential fashion. Binds GTP-bound translation factors.

In terms of biological role, forms part of the ribosomal stalk which helps the ribosome interact with GTP-bound translation factors. Is thus essential for accurate translation. This Helicobacter pylori (strain HPAG1) protein is Large ribosomal subunit protein bL12.